The sequence spans 122 residues: Large ribosomal subunit protein uL14 (122 aa).

The protein belongs to the universal ribosomal protein uL14 family. As to quaternary structure, part of the 50S ribosomal subunit. Forms a cluster with proteins L3 and L19. In the 70S ribosome, L14 and L19 interact and together make contacts with the 16S rRNA in bridges B5 and B8.

In terms of biological role, binds to 23S rRNA. Forms part of two intersubunit bridges in the 70S ribosome. The protein is Large ribosomal subunit protein uL14 of Alteromonas mediterranea (strain DSM 17117 / CIP 110805 / LMG 28347 / Deep ecotype).